Reading from the N-terminus, the 569-residue chain is TBCC domain-containing protein 1 (569 aa).

A C-CAP/cofactor C-like domain is found at 304-435; it reads PRSHRIVVMS…LEDHMARTGL (132 aa).

It belongs to the TBCC family.

It is found in the cytoplasm. The protein resides in the cytoskeleton. It localises to the microtubule organizing center. Its subcellular location is the centrosome. The protein localises to the spindle pole. Its function is as follows. Plays a role in the regulation of centrosome and Golgi apparatus positioning, with consequences on cell shape and cell migration. This is TBCC domain-containing protein 1 (Tbccd1) from Rattus norvegicus (Rat).